A 446-amino-acid chain; its full sequence is Chromosomal replication initiator protein DnaA (446 aa).

A domain I, interacts with DnaA modulators region spans residues 1–81 (MENISDLWNS…AKLAIRFIIP (81 aa)). The interval 81–109 (PQSQAEEDIDLPPVKPNPAQDDSAHLPQS) is domain II. The tract at residues 110–326 (MLNPKYTFDT…GALIRVVAYS (217 aa)) is domain III, AAA+ region. ATP-binding residues include G154, G156, K157, and T158. The segment at 327 to 446 (SLINKDINAD…QVEEINGILK (120 aa)) is domain IV, binds dsDNA.

It belongs to the DnaA family. Oligomerizes as a right-handed, spiral filament on DNA at oriC.

The protein localises to the cytoplasm. Its function is as follows. Plays an essential role in the initiation and regulation of chromosomal replication. ATP-DnaA binds to the origin of replication (oriC) to initiate formation of the DNA replication initiation complex once per cell cycle. Binds the DnaA box (a 9 base pair repeat at the origin) and separates the double-stranded (ds)DNA. Forms a right-handed helical filament on oriC DNA; dsDNA binds to the exterior of the filament while single-stranded (ss)DNA is stabiized in the filament's interior. The ATP-DnaA-oriC complex binds and stabilizes one strand of the AT-rich DNA unwinding element (DUE), permitting loading of DNA polymerase. After initiation quickly degrades to an ADP-DnaA complex that is not apt for DNA replication. Binds acidic phospholipids. This chain is Chromosomal replication initiator protein DnaA, found in Bacillus cereus (strain B4264).